A 596-amino-acid chain; its full sequence is Polyphenol oxidase B, chloroplastic (596 aa).

The tract at residues 1–23 (MASVVCNSSSSTTTTTLKTPFTS) is disordered. The transit peptide at 1-87 (MASVVCNSSS…ANAIPLAASA (87 aa)) directs the protein to the chloroplast. Residues 8-23 (SSSSTTTTTLKTPFTS) are compositionally biased toward low complexity. Disulfide bonds link Cys-98-Cys-114 and Cys-113-Cys-182. Cu cation-binding residues include His-181, His-199, His-208, His-329, His-333, and His-371. A cross-link (2'-(S-cysteinyl)-histidine (Cys-His)) is located at residues 185-199 (CNGAYIIGGKELQVH).

It belongs to the tyrosinase family. Cu(2+) serves as cofactor.

The protein resides in the plastid. It localises to the chloroplast thylakoid lumen. It catalyses the reaction 2 catechol + O2 = 2 1,2-benzoquinone + 2 H2O. Catalyzes the oxidation of mono- and o-diphenols to o-diquinones. The chain is Polyphenol oxidase B, chloroplastic from Solanum lycopersicum (Tomato).